We begin with the raw amino-acid sequence, 114 residues long: MARGGFPGMGGGMNINNLMKQAQKMQQQMQKVQGELEEKEFVASAGGGAVTVKANGKKEILSINIEPDVVDPDDVEMLQDLILAACNQALKTADEETANEMKKLTGGLNMPGMF.

It belongs to the YbaB/EbfC family. Homodimer.

It is found in the cytoplasm. The protein localises to the nucleoid. Its function is as follows. Binds to DNA and alters its conformation. May be involved in regulation of gene expression, nucleoid organization and DNA protection. The chain is Nucleoid-associated protein NT01CX_0824 from Clostridium novyi (strain NT).